Reading from the N-terminus, the 146-residue chain is Snaclec mamushigin subunit beta (146 aa).

The signal sequence occupies residues 1–23; sequence MGRFIFLSFGLLVVFVSLSGTGA. Intrachain disulfides connect cysteine 25-cysteine 36, cysteine 53-cysteine 142, and cysteine 119-cysteine 134. The C-type lectin domain maps to 32 to 143; the sequence is YEGHCYRVFQ…CSRTYNVVCK (112 aa).

In terms of assembly, heterodimer of subunits alpha and beta; disulfide-linked. As to expression, expressed by the venom gland.

The protein resides in the secreted. Functionally, binds to platelet GPIbalpha (GP1BA) and enhances platelet aggregation at low-shear stress. At high-shear stress, blocks platelet aggregation in a dose-dependent manner. In Gloydius blomhoffii (Mamushi), this protein is Snaclec mamushigin subunit beta.